A 194-amino-acid chain; its full sequence is Molybdenum cofactor guanylyltransferase (194 aa).

Residues 12–14 (LAG), lysine 25, asparagine 53, aspartate 70, and aspartate 100 contribute to the GTP site. Aspartate 100 is a binding site for Mg(2+).

The protein belongs to the MobA family. As to quaternary structure, monomer. Mg(2+) is required as a cofactor.

The protein localises to the cytoplasm. It carries out the reaction Mo-molybdopterin + GTP + H(+) = Mo-molybdopterin guanine dinucleotide + diphosphate. Functionally, transfers a GMP moiety from GTP to Mo-molybdopterin (Mo-MPT) cofactor (Moco or molybdenum cofactor) to form Mo-molybdopterin guanine dinucleotide (Mo-MGD) cofactor. This is Molybdenum cofactor guanylyltransferase from Photobacterium profundum (strain SS9).